Reading from the N-terminus, the 415-residue chain is Phosphoglycerate kinase (415 aa).

Substrate contacts are provided by residues 24–26 (DLN), R39, 62–65 (HLGR), R121, and R161. Residues K211, G307, E338, and 367–370 (GGDS) each bind ATP.

The protein belongs to the phosphoglycerate kinase family. As to quaternary structure, monomer.

It is found in the cytoplasm. The catalysed reaction is (2R)-3-phosphoglycerate + ATP = (2R)-3-phospho-glyceroyl phosphate + ADP. It functions in the pathway carbohydrate degradation; glycolysis; pyruvate from D-glyceraldehyde 3-phosphate: step 2/5. This is Phosphoglycerate kinase from Micrococcus luteus (strain ATCC 4698 / DSM 20030 / JCM 1464 / CCM 169 / CCUG 5858 / IAM 1056 / NBRC 3333 / NCIMB 9278 / NCTC 2665 / VKM Ac-2230) (Micrococcus lysodeikticus).